Consider the following 455-residue polypeptide: Nucleolar protein 12 (455 aa).

Disordered regions lie at residues 1–104 (MSSF…ENEN) and 117–142 (QNEE…RTKA). Basic and acidic residues predominate over residues 24-37 (NTRDGPVSKDELVK). Over residues 51–66 (PKQQTNENESTLNQSA) the composition is skewed to polar residues. Acidic residues predominate over residues 68–91 (ESDEEEEEYNDESNEGDDSDDAEQ). The span at 124 to 141 (SKESSEAKSSKVAEERTK) shows a compositional bias: basic and acidic residues. 2 RRM domains span residues 160–258 (RTVF…HVSH) and 266–351 (RTIF…RAKS). Disordered stretches follow at residues 333–402 (LETG…RSTV) and 420–455 (AIKG…MNKV). The segment covering 339-348 (KKGRKLRISR) has biased composition (basic residues). Polar residues predominate over residues 349-363 (AKSNAKPSLMSPNHF). The segment covering 425–438 (KGSKKGKKVKKPRI) has biased composition (basic residues). The segment covering 439 to 455 (RERSTKFKEERKTMNKV) has biased composition (basic and acidic residues).

This sequence belongs to the RRM RBM34 family.

It localises to the nucleus. Its subcellular location is the nucleolus. Functionally, involved in pre-25S rRNA processing. This chain is Nucleolar protein 12 (NOP12), found in Candida albicans (strain SC5314 / ATCC MYA-2876) (Yeast).